Reading from the N-terminus, the 159-residue chain is Phosphopantetheine adenylyltransferase (159 aa).

Residue Thr-9 participates in substrate binding. Residues 9 to 10 and His-17 contribute to the ATP site; that span reads TF. The substrate site is built by Lys-41, Leu-73, and Arg-87. ATP is bound by residues 88–90, Glu-98, and 123–129; these read GLR and YSYISST.

This sequence belongs to the bacterial CoaD family. As to quaternary structure, homohexamer. Requires Mg(2+) as cofactor.

It is found in the cytoplasm. It carries out the reaction (R)-4'-phosphopantetheine + ATP + H(+) = 3'-dephospho-CoA + diphosphate. It participates in cofactor biosynthesis; coenzyme A biosynthesis; CoA from (R)-pantothenate: step 4/5. Functionally, reversibly transfers an adenylyl group from ATP to 4'-phosphopantetheine, yielding dephospho-CoA (dPCoA) and pyrophosphate. The protein is Phosphopantetheine adenylyltransferase of Azotobacter vinelandii (strain DJ / ATCC BAA-1303).